The following is a 75-amino-acid chain: ATP synthase subunit c (75 aa).

Transmembrane regions (helical) follow at residues 13 to 33 (LSVI…GILF) and 55 to 75 (FIGL…ALII).

Belongs to the ATPase C chain family. F-type ATPases have 2 components, F(1) - the catalytic core - and F(0) - the membrane proton channel. F(1) has five subunits: alpha(3), beta(3), gamma(1), delta(1), epsilon(1). F(0) has three main subunits: a(1), b(2) and c(10-14). The alpha and beta chains form an alternating ring which encloses part of the gamma chain. F(1) is attached to F(0) by a central stalk formed by the gamma and epsilon chains, while a peripheral stalk is formed by the delta and b chains.

It is found in the cell membrane. F(1)F(0) ATP synthase produces ATP from ADP in the presence of a proton or sodium gradient. F-type ATPases consist of two structural domains, F(1) containing the extramembraneous catalytic core and F(0) containing the membrane proton channel, linked together by a central stalk and a peripheral stalk. During catalysis, ATP synthesis in the catalytic domain of F(1) is coupled via a rotary mechanism of the central stalk subunits to proton translocation. In terms of biological role, key component of the F(0) channel; it plays a direct role in translocation across the membrane. A homomeric c-ring of between 10-14 subunits forms the central stalk rotor element with the F(1) delta and epsilon subunits. In Bifidobacterium longum (strain DJO10A), this protein is ATP synthase subunit c.